A 285-amino-acid polypeptide reads, in one-letter code: Undecaprenyl-diphosphatase (285 aa).

The next 7 helical transmembrane spans lie at 40-60 (DELL…LLYF), 92-112 (LCIL…ENFI), 122-142 (SVYA…WADA), 159-179 (FLIG…RSGI), 197-217 (FSML…LLGL), 233-253 (LIVA…LMAL), and 259-279 (FLPF…TSPI).

Belongs to the UppP family.

It localises to the cell inner membrane. It carries out the reaction di-trans,octa-cis-undecaprenyl diphosphate + H2O = di-trans,octa-cis-undecaprenyl phosphate + phosphate + H(+). Functionally, catalyzes the dephosphorylation of undecaprenyl diphosphate (UPP). Confers resistance to bacitracin. This chain is Undecaprenyl-diphosphatase, found in Hyphomonas neptunium (strain ATCC 15444).